A 1804-amino-acid polypeptide reads, in one-letter code: Obscurin-like protein 1 (1804 aa).

Position 10 is a phosphoserine (serine 10). Ig-like domains follow at residues 12–100 (PCFL…AAVT), 128–225 (PKFL…ALLQ), 241–330 (PKPV…QTLS), and 339–425 (PRLR…ANVT). The segment at 17–19 (FPR) is interaction with TTN. An intrachain disulfide couples cysteine 33 to cysteine 84. The interaction with TTN stretch occupies residues 85 to 94 (RARNAAGEAY). A disulfide bond links cysteine 149 and cysteine 209. The interval 227-249 (HQPRESPPQDPDENPKPVLEPLK) is disordered. Disulfide bonds link cysteine 267–cysteine 319 and cysteine 362–cysteine 412. In terms of domain architecture, Fibronectin type-III spans 517–615 (PPGPPVMVEM…FNGSAHLVPT (99 aa)). 10 consecutive Ig-like domains span residues 720-800 (PQDK…FGVT), 804-891 (PPVH…FTVT), 902-982 (PSSE…FTIT), 986-1075 (PPVR…VTVT), 1078-1165 (PERI…FNVS), 1176-1261 (PEAA…FNVQ), 1266-1442 (PPVK…ARLS), 1536-1621 (PVTI…ARLT), 1625-1694 (REVS…EDTG), and 1702-1798 (PAQS…ADTQ). Intrachain disulfides connect cysteine 738-cysteine 788, cysteine 829-cysteine 879, cysteine 920-cysteine 970, cysteine 1011-cysteine 1061, cysteine 1103-cysteine 1153, cysteine 1195-cysteine 1245, cysteine 1289-cysteine 1430, and cysteine 1558-cysteine 1608.

In terms of assembly, component of the 3M complex, composed of core components CUL7, CCDC8 and OBSL1. Interacts with CCDC8. Interacts with CUL7; the interaction is direct. Interacts with FBXW8. Interacts (via N-terminal Ig-like domain) with TTN/titin (via C-terminal Ig-like domain); the interaction is direct.

It is found in the cytoplasm. It localises to the perinuclear region. The protein localises to the golgi apparatus. Functionally, core component of the 3M complex, a complex required to regulate microtubule dynamics and genome integrity. It is unclear how the 3M complex regulates microtubules, it could act by controlling the level of a microtubule stabilizer. Acts as a regulator of the Cul7-RING(FBXW8) ubiquitin-protein ligase, playing a critical role in the ubiquitin ligase pathway that regulates Golgi morphogenesis and dendrite patterning in brain. Required to localize CUL7 to the Golgi apparatus in neurons. This Mus musculus (Mouse) protein is Obscurin-like protein 1 (Obsl1).